The following is a 353-amino-acid chain: UPF0283 membrane protein KPK_3110 (353 aa).

Helical transmembrane passes span 70–90 (MVSA…VQWT), 99–119 (WIAL…VGSV), and 213–233 (ESTL…FIAW).

It belongs to the UPF0283 family.

Its subcellular location is the cell inner membrane. The polypeptide is UPF0283 membrane protein KPK_3110 (Klebsiella pneumoniae (strain 342)).